A 229-amino-acid polypeptide reads, in one-letter code: Enolase-phosphatase E1 (229 aa).

A disordered region spans residues 207 to 229; sequence RDPASHHPQVQRFDDIHPEQIPA. Residues 218-229 are compositionally biased toward basic and acidic residues; sequence RFDDIHPEQIPA.

This sequence belongs to the HAD-like hydrolase superfamily. MasA/MtnC family. Monomer. The cofactor is Mg(2+).

It carries out the reaction 5-methylsulfanyl-2,3-dioxopentyl phosphate + H2O = 1,2-dihydroxy-5-(methylsulfanyl)pent-1-en-3-one + phosphate. It functions in the pathway amino-acid biosynthesis; L-methionine biosynthesis via salvage pathway; L-methionine from S-methyl-5-thio-alpha-D-ribose 1-phosphate: step 3/6. The protein operates within amino-acid biosynthesis; L-methionine biosynthesis via salvage pathway; L-methionine from S-methyl-5-thio-alpha-D-ribose 1-phosphate: step 4/6. Functionally, bifunctional enzyme that catalyzes the enolization of 2,3-diketo-5-methylthiopentyl-1-phosphate (DK-MTP-1-P) into the intermediate 2-hydroxy-3-keto-5-methylthiopentenyl-1-phosphate (HK-MTPenyl-1-P), which is then dephosphorylated to form the acireductone 1,2-dihydroxy-3-keto-5-methylthiopentene (DHK-MTPene). The protein is Enolase-phosphatase E1 of Klebsiella pneumoniae subsp. pneumoniae (strain ATCC 700721 / MGH 78578).